We begin with the raw amino-acid sequence, 91 residues long: Putative regulatory protein Moth_0891 (91 aa).

This sequence belongs to the RemA family.

The chain is Putative regulatory protein Moth_0891 from Moorella thermoacetica (strain ATCC 39073 / JCM 9320).